The chain runs to 277 residues: 2-dehydro-3-deoxyphosphooctonate aldolase (277 aa).

It belongs to the KdsA family.

The protein localises to the cytoplasm. It catalyses the reaction D-arabinose 5-phosphate + phosphoenolpyruvate + H2O = 3-deoxy-alpha-D-manno-2-octulosonate-8-phosphate + phosphate. It functions in the pathway carbohydrate biosynthesis; 3-deoxy-D-manno-octulosonate biosynthesis; 3-deoxy-D-manno-octulosonate from D-ribulose 5-phosphate: step 2/3. It participates in bacterial outer membrane biogenesis; lipopolysaccharide biosynthesis. This Brucella canis (strain ATCC 23365 / NCTC 10854 / RM-666) protein is 2-dehydro-3-deoxyphosphooctonate aldolase.